We begin with the raw amino-acid sequence, 36 residues long: Photosystem I reaction center subunit VIII (36 aa).

Residues phenylalanine 6–leucine 28 form a helical membrane-spanning segment.

Belongs to the PsaI family.

It is found in the plastid. Its subcellular location is the chloroplast thylakoid membrane. Functionally, may help in the organization of the PsaL subunit. In Panax ginseng (Korean ginseng), this protein is Photosystem I reaction center subunit VIII.